The following is a 192-amino-acid chain: Acetolactate synthase small subunit (192 aa).

One can recognise an ACT domain in the interval Ile29–Asp103.

It belongs to the acetolactate synthase small subunit family. Dimer of large and small chains.

The catalysed reaction is 2 pyruvate + H(+) = (2S)-2-acetolactate + CO2. It functions in the pathway amino-acid biosynthesis; L-isoleucine biosynthesis; L-isoleucine from 2-oxobutanoate: step 1/4. Its pathway is amino-acid biosynthesis; L-valine biosynthesis; L-valine from pyruvate: step 1/4. The sequence is that of Acetolactate synthase small subunit (ilvH) from Aquifex aeolicus (strain VF5).